We begin with the raw amino-acid sequence, 875 residues long: Circadian locomoter output cycles protein kaput (875 aa).

A Nuclear localization signal motif is present at residues 32–47 (DKAKRVSRNKSEKKRR). The 51-residue stretch at 34 to 84 (AKRVSRNKSEKKRRDQFNVLIKELGSMLPGNARKMDKSTVLQKSIDFLRKH) folds into the bHLH domain. Phosphoserine occurs at positions 38 and 42. Lysine 67 is covalently cross-linked (Glycyl lysine isopeptide (Lys-Gly) (interchain with G-Cter in SUMO1)). PAS domains are found at residues 107–177 (NEEF…LLES) and 262–332 (FIKE…MQYG). In terms of domain architecture, PAC spans 336-379 (SCYYRFLTKGQQWIWLQTHYYITYHQWNSRPEFIVCTHTVVSYA). Serine 408 bears the Phosphoserine mark. Residues 420-507 (ALERFDTSPT…TMSQPATLQL (88 aa)) form a disordered region. Serine 427 is subject to Phosphoserine; by GSK3-beta. A compositionally biased stretch (polar residues) spans 447 to 468 (DHSSTPTKMTVDTSTPPRQSLS). 2 positions are modified to phosphothreonine; by CDK5: threonine 451 and threonine 461. The segment covering 476–490 (RRSSLSSQSLSSQSL) has biased composition (low complexity). Over residues 491–507 (GQPVTQPTMSQPATLQL) the composition is skewed to polar residues. The interval 516–566 (FQFSAQLGAMQHLKDQLEQRTRMIEANIHRQQEELRKIQEQLQIVHGQGLQ) is implicated in the circadian rhythmicity. Disordered regions lie at residues 628-674 (TQSG…AGQS), 794-813 (QQQLTAVQQPAQPQLTQHPQ), and 842-875 (TFTQSHHQQHQPQQQQLSRHRTDKMTDPSKAQPQ). The span at 842 to 857 (TFTQSHHQQHQPQQQQ) shows a compositional bias: low complexity. Lysine 871 is covalently cross-linked (Glycyl lysine isopeptide (Lys-Gly) (interchain with G-Cter in SUMO1)).

As to quaternary structure, component of the circadian clock oscillator which includes the CRY proteins, CLOCK or NPAS2, BMAL1 or BMAL2, CSNK1D and/or CSNK1E, TIMELESS and the PER proteins. Forms a heterodimer with BMAL1. The CLOCK-BMAL1 heterodimer is required for E-box-dependent transactivation, for CLOCK nuclear translocation and degradation, and for phosphorylation of both CLOCK and BMAL1. Interaction with PER and CRY proteins requires translocation to the nucleus. Interaction of the CLOCK-BMAL1 heterodimer with PER or CRY inhibits transcription activation. Interacts with BMAL2. Ubiquitinated, leading to its proteasomal degradation. Post-translationally, O-glycosylated; contains O-GlcNAc. O-glycosylation by OGT prevents protein degradation by inhibiting ubiquitination. It also stabilizes the CLOCK-BMAL1 heterodimer thereby increasing CLOCK-BMAL1-mediated transcriptional activation of PER1/2/3 and CRY1/2. In terms of processing, phosphorylation is dependent on the CLOCK-BMAL1 heterodimer formation. Phosphorylation enhances the transcriptional activity, alters the subcellular localization and decreases the stability of the heterodimer by promoting its degradation. Sumoylation enhances its transcriptional activity and interaction with ESR1, resulting in up-regulation of ESR1 activity. Estrogen stimulates sumoylation. Desumoylation by SENP1 negatively regulates its transcriptional activity. Post-translationally, undergoes lysosome-mediated degradation in a time-dependent manner in the liver. As to expression, expressed in the retinal photoreceptor cells (at protein level). Isoform 1 is expressed in both the retina and pineal gland. Isoform 2 is expressed mainly in the pineal gland.

It is found in the cytoplasm. Its subcellular location is the nucleus. The protein resides in the cytosol. In terms of biological role, transcriptional activator which forms a core component of the circadian clock. The circadian clock, an internal time-keeping system, regulates various physiological processes through the generation of approximately 24 hour circadian rhythms in gene expression, which are translated into rhythms in metabolism and behavior. It is derived from the Latin roots 'circa' (about) and 'diem' (day) and acts as an important regulator of a wide array of physiological functions including metabolism, sleep, body temperature, blood pressure, endocrine, immune, cardiovascular, and renal function. Consists of two major components: the central clock, residing in the suprachiasmatic nucleus (SCN) of the brain, and the peripheral clocks that are present in nearly every tissue and organ system. Both the central and peripheral clocks can be reset by environmental cues, also known as Zeitgebers (German for 'timegivers'). The predominant Zeitgeber for the central clock is light, which is sensed by retina and signals directly to the SCN. The central clock entrains the peripheral clocks through neuronal and hormonal signals, body temperature and feeding-related cues, aligning all clocks with the external light/dark cycle. Circadian rhythms allow an organism to achieve temporal homeostasis with its environment at the molecular level by regulating gene expression to create a peak of protein expression once every 24 hours to control when a particular physiological process is most active with respect to the solar day. Transcription and translation of core clock components (CLOCK, NPAS2, BMAL1, BMAL2, PER1, PER2, PER3, CRY1 and CRY2) plays a critical role in rhythm generation, whereas delays imposed by post-translational modifications (PTMs) are important for determining the period (tau) of the rhythms (tau refers to the period of a rhythm and is the length, in time, of one complete cycle). A diurnal rhythm is synchronized with the day/night cycle, while the ultradian and infradian rhythms have a period shorter and longer than 24 hours, respectively. Disruptions in the circadian rhythms contribute to the pathology of cardiovascular diseases, cancer, metabolic syndromes and aging. A transcription/translation feedback loop (TTFL) forms the core of the molecular circadian clock mechanism. Transcription factors, CLOCK or NPAS2 and BMAL1 or BMAL2, form the positive limb of the feedback loop, act in the form of a heterodimer and activate the transcription of core clock genes and clock-controlled genes (involved in key metabolic processes), harboring E-box elements (5'-CACGTG-3') within their promoters. The core clock genes: PER1/2/3 and CRY1/2 which are transcriptional repressors form the negative limb of the feedback loop and interact with the CLOCK|NPAS2-BMAL1|BMAL2 heterodimer inhibiting its activity and thereby negatively regulating their own expression. This heterodimer also activates nuclear receptors NR1D1/2 and RORA/B/G, which form a second feedback loop and which activate and repress BMAL1 transcription, respectively. CLOCK regulates the circadian expression of AANAT in the retinal photoreceptor cells. The preferred binding motif for the CLOCK-BMAL1 heterodimer is 5'-CACGTGA-3', which contains a flanking adenine nucleotide at the 3-prime end of the canonical 6-nucleotide E-box sequence. CLOCK specifically binds to the half-site 5'-CAC-3', while BMAL1 binds to the half-site 5'-GTGA-3'. The protein is Circadian locomoter output cycles protein kaput (CLOCK) of Gallus gallus (Chicken).